The sequence spans 207 residues: FMN-dependent NADH:quinone oxidoreductase (207 aa).

FMN is bound at residue Ser10.

Belongs to the azoreductase type 1 family. As to quaternary structure, homodimer. The cofactor is FMN.

The catalysed reaction is 2 a quinone + NADH + H(+) = 2 a 1,4-benzosemiquinone + NAD(+). It carries out the reaction N,N-dimethyl-1,4-phenylenediamine + anthranilate + 2 NAD(+) = 2-(4-dimethylaminophenyl)diazenylbenzoate + 2 NADH + 2 H(+). Functionally, quinone reductase that provides resistance to thiol-specific stress caused by electrophilic quinones. In terms of biological role, also exhibits azoreductase activity. Catalyzes the reductive cleavage of the azo bond in aromatic azo compounds to the corresponding amines. This is FMN-dependent NADH:quinone oxidoreductase from Shouchella clausii (strain KSM-K16) (Alkalihalobacillus clausii).